The chain runs to 398 residues: Putative F-box protein At1g67450 (398 aa).

An F-box domain is found at 2-56 (TMMMSDLPNDLVEEILSRVPITSLGAVRSTCKRWNGLSKDRIVCKGDANQQFTGF).

The protein is Putative F-box protein At1g67450 of Arabidopsis thaliana (Mouse-ear cress).